A 152-amino-acid polypeptide reads, in one-letter code: MSEKYVVTWDMFHMHARKLAERLLPASQWKGIIAVSRGGLFPAAVLARELGLRHVETVCIASYDHDQQGDLKVIHKAETDGEGFIVVDDLVDTGNTAREIRNMYPKAKFVTVFAKPAGAPLVDDYVIDIPQNTWIEQPWDLGIGFVPPLARK.

5-phospho-alpha-D-ribose 1-diphosphate is bound by residues 37 to 38 (RG) and 88 to 96 (DDLVDTGNT). Asp-89 is a binding site for Mg(2+). Guanine contacts are provided by Asp-92 and Ile-135. Residues Asp-92 and Ile-135 each coordinate xanthine. Residues 92–96 (DTGNT) and 134–135 (WI) contribute to the GMP site.

It belongs to the purine/pyrimidine phosphoribosyltransferase family. XGPT subfamily. As to quaternary structure, homotetramer. Mg(2+) serves as cofactor.

The protein localises to the cell inner membrane. It carries out the reaction GMP + diphosphate = guanine + 5-phospho-alpha-D-ribose 1-diphosphate. The enzyme catalyses XMP + diphosphate = xanthine + 5-phospho-alpha-D-ribose 1-diphosphate. The catalysed reaction is IMP + diphosphate = hypoxanthine + 5-phospho-alpha-D-ribose 1-diphosphate. It participates in purine metabolism; GMP biosynthesis via salvage pathway; GMP from guanine: step 1/1. The protein operates within purine metabolism; XMP biosynthesis via salvage pathway; XMP from xanthine: step 1/1. Purine salvage pathway enzyme that catalyzes the transfer of the ribosyl-5-phosphate group from 5-phospho-alpha-D-ribose 1-diphosphate (PRPP) to the N9 position of the 6-oxopurines guanine and xanthine to form the corresponding ribonucleotides GMP (guanosine 5'-monophosphate) and XMP (xanthosine 5'-monophosphate), with the release of PPi. To a lesser extent, also acts on hypoxanthine. This is Xanthine-guanine phosphoribosyltransferase from Mannheimia succiniciproducens (strain KCTC 0769BP / MBEL55E).